Consider the following 966-residue polypeptide: Serine/threonine-protein kinase 10 (966 aa).

2 positions are modified to phosphoserine: serine 13 and serine 20. The Protein kinase domain maps to 36–294 (WEIVGELGDG…AAQLLQHPFV (259 aa)). ATP contacts are provided by residues 42–50 (LGDGAFGKV) and lysine 65. The active-site Proton acceptor is aspartate 157. An activation segment region spans residues 175–224 (DFGVSAKNLKTLQKRDSFIGTPYWMAPEVVLCETMKDAPYDYKADIWSLG). Threonine 185 carries the post-translational modification Phosphothreonine; by autocatalysis. Serine 191 is subject to Phosphoserine. Composition is skewed to polar residues over residues 341–363 (TQDSANVTQPSLDSNKLLQDSST) and 371–392 (QEPVSGSCSQPSGDGPLQTTSP). The tract at residues 341-497 (TQDSANVTQP…NLSTSESMDY (157 aa)) is disordered. Residues 421 to 430 (IQMDEEKQIP) are compositionally biased toward basic and acidic residues. A phosphoserine mark is found at serine 437, serine 449, serine 453, and serine 484. Polar residues predominate over residues 438–456 (PAASKSQKANQSRPNSSAL). Residues 485-497 (DCSNLSTSESMDY) show a composition bias toward polar residues. Residues serine 513 and serine 548 each carry the phosphoserine modification. Residues 588 to 936 (LQLEQMHKRF…LNQKKREQEM (349 aa)) are a coiled coil. Disordered stretches follow at residues 660–692 (KKEVKSEVEKLPRQQRKESMKQKMEEHSQKKQR), 826–865 (INGAGSASEQREKIKQFSQQEEKRQKAERLQQQQKHENQM), and 901–966 (LDES…GDAS). Basic and acidic residues-rich tracts occupy residues 834–865 (EQREKIKQFSQQEEKRQKAERLQQQQKHENQM) and 901–946 (LDES…EAEP). Threonine 950 carries the phosphothreonine modification. Residues 950-966 (TPSKASNFFPYSSGDAS) show a composition bias toward polar residues.

Belongs to the protein kinase superfamily. STE Ser/Thr protein kinase family. STE20 subfamily. Homodimer; homodimerization is required for activation segment autophosphorylation. Autophosphorylates following homodimerization, leading to activation of the protein. Expressed predominantly in lymphoid organs such as spleen, thymus, and bone marrow.

It localises to the cell membrane. The enzyme catalyses L-seryl-[protein] + ATP = O-phospho-L-seryl-[protein] + ADP + H(+). It catalyses the reaction L-threonyl-[protein] + ATP = O-phospho-L-threonyl-[protein] + ADP + H(+). Its activity is regulated as follows. Inhibited by the pyrrole-indolinone inhibitor SU11274 (K00593): intercalates between the ATP-binding Lys-65 and alpha-C glutamate (Glu-81), resulting in a partial disordering of the lysine side chain. Also specifically inhibited by erlotinib. Slightly inhibited by gefitinib. Functionally, serine/threonine-protein kinase involved in regulation of lymphocyte migration. Phosphorylates MSN, and possibly PLK1. Involved in regulation of lymphocyte migration by mediating phosphorylation of ERM proteins such as MSN. Acts as a negative regulator of MAP3K1/MEKK1. May also act as a cell cycle regulator by acting as a polo kinase kinase: mediates phosphorylation of PLK1 in vitro; however such data require additional evidences in vivo. The polypeptide is Serine/threonine-protein kinase 10 (Stk10) (Mus musculus (Mouse)).